Consider the following 77-residue polypeptide: MANIKSAIKRAELNVKQNEKNSAQKSAMRTAIKAFEANPSEELYRAASSSIDKAASKGLIHTNKASRDKARLATKLG.

The protein belongs to the bacterial ribosomal protein bS20 family.

In terms of biological role, binds directly to 16S ribosomal RNA. The protein is Small ribosomal subunit protein bS20 of Streptococcus agalactiae serotype Ia (strain ATCC 27591 / A909 / CDC SS700).